The following is an 838-amino-acid chain: Urease (838 aa).

One can recognise a Urease domain in the interval 402 to 838; sequence GGFDTHIHFI…LPLTQDYFVY (437 aa). Ni(2+) contacts are provided by His407, His409, and Lys490. Residue Lys490 is modified to N6-carboxylysine. His492 is a binding site for substrate. His519 and His545 together coordinate Ni(2+). His593 (proton donor) is an active-site residue. Asp633 contacts Ni(2+).

In the C-terminal section; belongs to the metallo-dependent hydrolases superfamily. Urease alpha subunit family. Homohexamer. Ni cation is required as a cofactor. In terms of processing, carboxylation allows a single lysine to coordinate two nickel ions.

The catalysed reaction is urea + 2 H2O + H(+) = hydrogencarbonate + 2 NH4(+). It functions in the pathway nitrogen metabolism; urea degradation; CO(2) and NH(3) from urea (urease route): step 1/1. This is Urease (ure1) from Aspergillus fumigatus (strain ATCC MYA-4609 / CBS 101355 / FGSC A1100 / Af293) (Neosartorya fumigata).